Consider the following 120-residue polypeptide: Large ribosomal subunit protein uL18 (120 aa).

The protein belongs to the universal ribosomal protein uL18 family. Part of the 50S ribosomal subunit; part of the 5S rRNA/L5/L18/L25 subcomplex. Contacts the 5S and 23S rRNAs.

Its function is as follows. This is one of the proteins that bind and probably mediate the attachment of the 5S RNA into the large ribosomal subunit, where it forms part of the central protuberance. This is Large ribosomal subunit protein uL18 from Staphylococcus carnosus (strain TM300).